We begin with the raw amino-acid sequence, 308 residues long: Oligopeptide transport ATP-binding protein OppF (308 aa).

An ABC transporter domain is found at 9–254; sequence VEVKNVSLTF…PIHPYTQSLL (246 aa). Position 46 to 53 (46 to 53) interacts with ATP; it reads GESGSGKT.

This sequence belongs to the ABC transporter superfamily. In terms of assembly, the complex is composed of two ATP-binding proteins (OppD and OppF), two transmembrane proteins (OppB and OppC) and a solute-binding protein (OppA).

It localises to the cell membrane. The catalysed reaction is a [peptide](out) + ATP + H2O = a [peptide](in) + ADP + phosphate + H(+). In terms of biological role, part of the ABC transporter complex OppABCDF involved in the uptake of oligopeptides. Probably responsible for energy coupling to the transport system. In Streptococcus mutans serotype c (strain ATCC 700610 / UA159), this protein is Oligopeptide transport ATP-binding protein OppF (oppF).